Consider the following 99-residue polypeptide: UPF0473 protein SMU_2077c (99 aa).

Belongs to the UPF0473 family.

The polypeptide is UPF0473 protein SMU_2077c (Streptococcus mutans serotype c (strain ATCC 700610 / UA159)).